The following is an 81-amino-acid chain: Photosystem I iron-sulfur center (81 aa).

4Fe-4S ferredoxin-type domains lie at 2–31 and 39–68; these read AHAV…MIPW and IASA…VRVY. Residues Cys-11, Cys-14, Cys-17, Cys-21, Cys-48, Cys-51, Cys-54, and Cys-58 each coordinate [4Fe-4S] cluster.

As to quaternary structure, the eukaryotic PSI reaction center is composed of at least 11 subunits. Requires [4Fe-4S] cluster as cofactor.

It is found in the plastid. Its subcellular location is the chloroplast thylakoid membrane. The catalysed reaction is reduced [plastocyanin] + hnu + oxidized [2Fe-2S]-[ferredoxin] = oxidized [plastocyanin] + reduced [2Fe-2S]-[ferredoxin]. Functionally, apoprotein for the two 4Fe-4S centers FA and FB of photosystem I (PSI); essential for photochemical activity. FB is the terminal electron acceptor of PSI, donating electrons to ferredoxin. The C-terminus interacts with PsaA/B/D and helps assemble the protein into the PSI complex. Required for binding of PsaD and PsaE to PSI. PSI is a plastocyanin-ferredoxin oxidoreductase, converting photonic excitation into a charge separation, which transfers an electron from the donor P700 chlorophyll pair to the spectroscopically characterized acceptors A0, A1, FX, FA and FB in turn. This Marchantia polymorpha (Common liverwort) protein is Photosystem I iron-sulfur center.